Consider the following 280-residue polypeptide: Four and a half LIM domains protein 3 (280 aa).

Ser-2 is subject to N-acetylserine. The C4-type zinc finger occupies 7 to 31 (CAKCSESLYGRKYIQTDDGPYCVPC). LIM zinc-binding domains lie at 40-92 (CAEC…CNDC) and 101-153 (CSAC…CVPC). Residue Lys-157 is modified to N6-acetyllysine. 2 consecutive LIM zinc-binding domains span residues 162–212 (CARC…CVTC) and 221–275 (CSSC…CQGC). Lys-235 carries the post-translational modification N6-acetyllysine.

As to quaternary structure, interacts with SOX15; the interaction recruits FHL3 to FOXK1 promoters where it acts as a transcriptional coactivator of FOXK1.

Its subcellular location is the nucleus. The protein localises to the cytoplasm. In terms of biological role, recruited by SOX15 to FOXK1 promoters where it acts as a transcriptional coactivator of FOXK1. The protein is Four and a half LIM domains protein 3 (FHL3) of Bos taurus (Bovine).